A 745-amino-acid chain; its full sequence is Dipeptidyl aminopeptidase 4 (745 aa).

Residues 1–22 (MRLALFALFALMTVATALPAHA) form the signal peptide. Positions 208 and 209 each coordinate substrate. Catalysis depends on charge relay system residues S613, D689, and H721.

Belongs to the peptidase S9B family. As to quaternary structure, homodimer.

It is found in the cytoplasm. Its subcellular location is the periplasm. The enzyme catalyses Release of an N-terminal dipeptide, Xaa-Yaa-|-Zaa-, from a polypeptide, preferentially when Yaa is Pro, provided Zaa is neither Pro nor hydroxyproline.. Completely inhibited by the serine protease inhibitor diisopropyl fluorophosphate (DFP) and moderately by N-tosyl-L-phenyl-alanyl chloromethyl ketone (TPCK). Somewhat inhibited by phenylmethanesulfonyl fluoride (PMSF). Activity is not affected by thiol- or metalloprotease inhibitors, such as iodoacetate (IAA), EDTA, N-tosyl-L-lysyl chloromethyl ketone (TLCK), o-phenanthlorine, N-ethylmaleimide (NEM) or dithiothreitol (DTT). Catalyzes the sequential release of Tyr-Pro, Phe-Pro and Gly-Pro from the N-terminus of peptides and proteins. Is able to cleaves bioactive peptide beta-casomorphin. This Pseudoxanthomonas mexicana protein is Dipeptidyl aminopeptidase 4.